Reading from the N-terminus, the 370-residue chain is Divinyl chlorophyll a/b light-harvesting protein PcbD (370 aa).

6 helical membrane-spanning segments follow: residues F27–L47, V88–L108, F140–A160, V201–V221, A248–A268, and L315–L335.

This sequence belongs to the PsbB/PsbC family. IsiA/Pcb subfamily. In terms of assembly, the antenna complex consists of divinyl chlorophylls (a and b) and divinyl chlorophyll a/b binding proteins and binds more divinyl chlorophyll b than does the antenna complex from high-light-adapted Prochlorococcus. The cofactor is divinyl chlorophyll a. It depends on divinyl chlorophyll b as a cofactor.

It localises to the cellular thylakoid membrane. In terms of biological role, the antenna complex functions as a light receptor, it captures and delivers excitation energy to photosystems II and I. The Prochlorales pcb genes are not related to higher plant LHCs. The sequence is that of Divinyl chlorophyll a/b light-harvesting protein PcbD (pcbD) from Prochlorococcus marinus (strain NATL2A).